Here is an 879-residue protein sequence, read N- to C-terminus: Protein translocase subunit SecA (879 aa).

Residues Gln86, 104–108, and Asp500 contribute to the ATP site; that span reads GEGKT. Zn(2+)-binding residues include Cys863, Cys865, Cys874, and His875.

The protein belongs to the SecA family. In terms of assembly, monomer and homodimer. Part of the essential Sec protein translocation apparatus which comprises SecA, SecYEG and auxiliary proteins SecDF-YajC and YidC. Zn(2+) serves as cofactor.

It is found in the cell inner membrane. The protein resides in the cytoplasm. The enzyme catalyses ATP + H2O + cellular proteinSide 1 = ADP + phosphate + cellular proteinSide 2.. Functionally, part of the Sec protein translocase complex. Interacts with the SecYEG preprotein conducting channel. Has a central role in coupling the hydrolysis of ATP to the transfer of proteins into and across the cell membrane, serving both as a receptor for the preprotein-SecB complex and as an ATP-driven molecular motor driving the stepwise translocation of polypeptide chains across the membrane. This chain is Protein translocase subunit SecA, found in Orientia tsutsugamushi (strain Ikeda) (Rickettsia tsutsugamushi).